The chain runs to 524 residues: Na(+)/H(+) antiporter NhaB (524 aa).

A run of 13 helical transmembrane segments spans residues L23–V43, G45–L65, L98–F118, C136–I156, L203–P223, F239–I259, A304–V324, G325–G345, L358–I378, L392–V412, A420–T440, A448–I468, and A479–V499.

It belongs to the NhaB Na(+)/H(+) (TC 2.A.34) antiporter family.

The protein localises to the cell inner membrane. The catalysed reaction is 2 Na(+)(in) + 3 H(+)(out) = 2 Na(+)(out) + 3 H(+)(in). In terms of biological role, na(+)/H(+) antiporter that extrudes sodium in exchange for external protons. The polypeptide is Na(+)/H(+) antiporter NhaB (Yersinia enterocolitica serotype O:8 / biotype 1B (strain NCTC 13174 / 8081)).